Consider the following 434-residue polypeptide: D-amino acid dehydrogenase (434 aa).

3–17 (VVILGSGVVGVASAW) is a binding site for FAD.

The protein belongs to the DadA oxidoreductase family. Requires FAD as cofactor.

It carries out the reaction a D-alpha-amino acid + A + H2O = a 2-oxocarboxylate + AH2 + NH4(+). It functions in the pathway amino-acid degradation; D-alanine degradation; NH(3) and pyruvate from D-alanine: step 1/1. In terms of biological role, oxidative deamination of D-amino acids. This chain is D-amino acid dehydrogenase, found in Serratia proteamaculans (strain 568).